Reading from the N-terminus, the 156-residue chain is 6,7-dimethyl-8-ribityllumazine synthase (156 aa).

Residues Phe22, 57 to 59 (AYE), and 81 to 83 (TVI) each bind 5-amino-6-(D-ribitylamino)uracil. 86 to 87 (GT) provides a ligand contact to (2S)-2-hydroxy-3-oxobutyl phosphate. The Proton donor role is filled by His89. Phe114 is a binding site for 5-amino-6-(D-ribitylamino)uracil. Residue Arg128 participates in (2S)-2-hydroxy-3-oxobutyl phosphate binding.

It belongs to the DMRL synthase family. As to quaternary structure, forms an icosahedral capsid composed of 60 subunits, arranged as a dodecamer of pentamers.

The catalysed reaction is (2S)-2-hydroxy-3-oxobutyl phosphate + 5-amino-6-(D-ribitylamino)uracil = 6,7-dimethyl-8-(1-D-ribityl)lumazine + phosphate + 2 H2O + H(+). It functions in the pathway cofactor biosynthesis; riboflavin biosynthesis; riboflavin from 2-hydroxy-3-oxobutyl phosphate and 5-amino-6-(D-ribitylamino)uracil: step 1/2. Functionally, catalyzes the formation of 6,7-dimethyl-8-ribityllumazine by condensation of 5-amino-6-(D-ribitylamino)uracil with 3,4-dihydroxy-2-butanone 4-phosphate. This is the penultimate step in the biosynthesis of riboflavin. This is 6,7-dimethyl-8-ribityllumazine synthase from Citrobacter koseri (strain ATCC BAA-895 / CDC 4225-83 / SGSC4696).